We begin with the raw amino-acid sequence, 100 residues long: Urease subunit gamma (100 aa).

It belongs to the urease gamma subunit family. Heterotrimer of UreA (gamma), UreB (beta) and UreC (alpha) subunits. Three heterotrimers associate to form the active enzyme.

The protein resides in the cytoplasm. It catalyses the reaction urea + 2 H2O + H(+) = hydrogencarbonate + 2 NH4(+). It functions in the pathway nitrogen metabolism; urea degradation; CO(2) and NH(3) from urea (urease route): step 1/1. In Frankia alni (strain DSM 45986 / CECT 9034 / ACN14a), this protein is Urease subunit gamma.